The sequence spans 396 residues: Agropine synthesis cyclase (396 aa).

This sequence belongs to the peptidase M24B family.

The chain is Agropine synthesis cyclase (ags) from Rhizobium rhizogenes (Agrobacterium rhizogenes).